The sequence spans 380 residues: uncharacterized protein (380 aa).

Positions 111-369 constitute a Peptidase M14 domain; that stretch reads APYSMERHHD…DCLAILAEMI (259 aa). Zn(2+)-binding residues include H164, E167, and H257. The active-site Proton donor/acceptor is E333.

It depends on Zn(2+) as a cofactor.

This is an uncharacterized protein from Zymomonas mobilis subsp. mobilis (strain ATCC 31821 / ZM4 / CP4).